Consider the following 82-residue polypeptide: Small ribosomal subunit protein uS17 (82 aa).

The protein belongs to the universal ribosomal protein uS17 family. As to quaternary structure, part of the 30S ribosomal subunit.

Its function is as follows. One of the primary rRNA binding proteins, it binds specifically to the 5'-end of 16S ribosomal RNA. The chain is Small ribosomal subunit protein uS17 from Synechococcus elongatus (strain ATCC 33912 / PCC 7942 / FACHB-805) (Anacystis nidulans R2).